Here is a 258-residue protein sequence, read N- to C-terminus: Acyl-[acyl-carrier-protein]--UDP-N-acetylglucosamine O-acyltransferase (258 aa).

This sequence belongs to the transferase hexapeptide repeat family. LpxA subfamily. As to quaternary structure, homotrimer.

The protein resides in the cytoplasm. The catalysed reaction is a (3R)-hydroxyacyl-[ACP] + UDP-N-acetyl-alpha-D-glucosamine = a UDP-3-O-[(3R)-3-hydroxyacyl]-N-acetyl-alpha-D-glucosamine + holo-[ACP]. Its pathway is glycolipid biosynthesis; lipid IV(A) biosynthesis; lipid IV(A) from (3R)-3-hydroxytetradecanoyl-[acyl-carrier-protein] and UDP-N-acetyl-alpha-D-glucosamine: step 1/6. Functionally, involved in the biosynthesis of lipid A, a phosphorylated glycolipid that anchors the lipopolysaccharide to the outer membrane of the cell. This is Acyl-[acyl-carrier-protein]--UDP-N-acetylglucosamine O-acyltransferase from Saccharophagus degradans (strain 2-40 / ATCC 43961 / DSM 17024).